Consider the following 458-residue polypeptide: 3-isopropylmalate dehydratase large subunit (458 aa).

The [4Fe-4S] cluster site is built by Cys337, Cys397, and Cys400.

It belongs to the aconitase/IPM isomerase family. LeuC type 1 subfamily. Heterodimer of LeuC and LeuD. Requires [4Fe-4S] cluster as cofactor.

It carries out the reaction (2R,3S)-3-isopropylmalate = (2S)-2-isopropylmalate. The protein operates within amino-acid biosynthesis; L-leucine biosynthesis; L-leucine from 3-methyl-2-oxobutanoate: step 2/4. Functionally, catalyzes the isomerization between 2-isopropylmalate and 3-isopropylmalate, via the formation of 2-isopropylmaleate. The chain is 3-isopropylmalate dehydratase large subunit from Leuconostoc mesenteroides subsp. mesenteroides (strain ATCC 8293 / DSM 20343 / BCRC 11652 / CCM 1803 / JCM 6124 / NCDO 523 / NBRC 100496 / NCIMB 8023 / NCTC 12954 / NRRL B-1118 / 37Y).